Reading from the N-terminus, the 86-residue chain is UPF0512 protein V (86 aa).

Belongs to the UPF0512 family.

This Dictyostelium discoideum (Social amoeba) protein is UPF0512 protein V.